A 922-amino-acid polypeptide reads, in one-letter code: Translation initiation factor IF-2 (922 aa).

A disordered region spans residues K33–E310. Positions P75–P87 are enriched in low complexity. Pro residues-rich tracts occupy residues G88–Q98 and T140–K150. Low complexity-rich tracts occupy residues P151 to P169 and P202 to K211. Composition is skewed to gly residues over residues K215–R225 and F248–G292. Over residues R296–K305 the composition is skewed to basic residues. In terms of domain architecture, tr-type G spans Q418–D590. The interval G427–T434 is G1. G427–T434 contributes to the GTP binding site. A G2 region spans residues G452–H456. The segment at D477–G480 is G3. Residues D477–H481 and N531–D534 contribute to the GTP site. The interval N531–D534 is G4. The tract at residues S567–K569 is G5.

The protein belongs to the TRAFAC class translation factor GTPase superfamily. Classic translation factor GTPase family. IF-2 subfamily.

The protein resides in the cytoplasm. One of the essential components for the initiation of protein synthesis. Protects formylmethionyl-tRNA from spontaneous hydrolysis and promotes its binding to the 30S ribosomal subunits. Also involved in the hydrolysis of GTP during the formation of the 70S ribosomal complex. This chain is Translation initiation factor IF-2, found in Corynebacterium jeikeium (strain K411).